Consider the following 394-residue polypeptide: Acetate kinase (394 aa).

Asn-7 serves as a coordination point for Mg(2+). Lys-14 lines the ATP pocket. Arg-90 contacts substrate. The active-site Proton donor/acceptor is the Asp-147. Residues 204 to 208, 278 to 280, and 326 to 330 contribute to the ATP site; these read HLGNG, DLR, and GIGEN. Glu-380 is a binding site for Mg(2+).

It belongs to the acetokinase family. In terms of assembly, homodimer. Mg(2+) serves as cofactor. The cofactor is Mn(2+).

It is found in the cytoplasm. The catalysed reaction is acetate + ATP = acetyl phosphate + ADP. The protein operates within metabolic intermediate biosynthesis; acetyl-CoA biosynthesis; acetyl-CoA from acetate: step 1/2. Its function is as follows. Catalyzes the formation of acetyl phosphate from acetate and ATP. Can also catalyze the reverse reaction. The chain is Acetate kinase from Flavobacterium johnsoniae (strain ATCC 17061 / DSM 2064 / JCM 8514 / BCRC 14874 / CCUG 350202 / NBRC 14942 / NCIMB 11054 / UW101) (Cytophaga johnsonae).